The sequence spans 472 residues: Chromosomal replication initiator protein DnaA (472 aa).

A domain I, interacts with DnaA modulators region spans residues 1–73 (MSNMEQDRWS…LSCWQAELPE (73 aa)). The interval 73 to 128 (EVNRVDLTVRSPVRCAAPAKEAPAPVESRRDEQRPSAERSNGATPVSANHDALGGS) is domain II. The tract at residues 89–124 (APAKEAPAPVESRRDEQRPSAERSNGATPVSANHDA) is disordered. Over residues 99-109 (ESRRDEQRPSA) the composition is skewed to basic and acidic residues. Residues 110–119 (ERSNGATPVS) show a composition bias toward polar residues. Residues 129-351 (PLDPRLTFAS…GAINRLLAHS (223 aa)) are domain III, AAA+ region. The ATP site is built by Gly176, Gly178, Lys179, and Thr180. The segment at 352-472 (KLNNQPVTLE…VESLKRQLQE (121 aa)) is domain IV, binds dsDNA.

This sequence belongs to the DnaA family. Oligomerizes as a right-handed, spiral filament on DNA at oriC.

Its subcellular location is the cytoplasm. Plays an essential role in the initiation and regulation of chromosomal replication. ATP-DnaA binds to the origin of replication (oriC) to initiate formation of the DNA replication initiation complex once per cell cycle. Binds the DnaA box (a 9 base pair repeat at the origin) and separates the double-stranded (ds)DNA. Forms a right-handed helical filament on oriC DNA; dsDNA binds to the exterior of the filament while single-stranded (ss)DNA is stabiized in the filament's interior. The ATP-DnaA-oriC complex binds and stabilizes one strand of the AT-rich DNA unwinding element (DUE), permitting loading of DNA polymerase. After initiation quickly degrades to an ADP-DnaA complex that is not apt for DNA replication. Binds acidic phospholipids. In Rhodopseudomonas palustris (strain TIE-1), this protein is Chromosomal replication initiator protein DnaA.